Here is a 295-residue protein sequence, read N- to C-terminus: CCAAT-binding factor complex subunit php4 (295 aa).

A compositionally biased stretch (low complexity) spans Met1 to Ala19. The disordered stretch occupies residues Met1–Glu69. Positions Arg73–Ser111 form a coiled coil. Positions Leu93 to Leu100 match the Nuclear export signal motif. The tract at residues Thr108–Glu130 is disordered.

As to quaternary structure, component of tha CCAAT-binding complex composed of at least php2, php3, php4 and php5. Interacts with crm1 and grx4.

Its subcellular location is the cytoplasm. It is found in the nucleus. It localises to the cytoskeleton. The protein resides in the spindle pole. Its function is as follows. Component of the transcription regulatory CCAAT-binding complex. Required for the reprogramming of the cell for iron use. Down-regulates pcl1, sdh4, and isa1 underlow-iron conditions. The chain is CCAAT-binding factor complex subunit php4 (php4) from Schizosaccharomyces pombe (strain 972 / ATCC 24843) (Fission yeast).